A 425-amino-acid polypeptide reads, in one-letter code: Type I restriction enzyme MjaVII specificity subunit (425 aa).

The target recognition domain 1 stretch occupies residues Lys-9–Leu-168. The central conserved region (CCR) stretch occupies residues Glu-169–Thr-208. Residues Glu-169–Thr-208 adopt a coiled-coil conformation. The tract at residues Lys-209–Leu-368 is target recognition domain 2. Positions Glu-369–Thr-418 form a coiled coil. Positions Glu-369–Thr-418 are distal conserved region (DCR).

The protein belongs to the type-I restriction system S methylase family. The type I restriction/modification system is composed of three polypeptides R, M and S.

Functionally, the specificity (S) subunit of a type I restriction enzyme; this subunit dictates DNA sequence specificity. The M and S subunits together form a methyltransferase (MTase) that methylates A-3 on the top and bottom strands of the sequence 5'-CAAN(7)TGG-3'. In the presence of the R subunit the complex can also act as an endonuclease, binding to the same target sequence but cutting the DNA some distance from this site. Whether the DNA is cut or modified depends on the methylation state of the target sequence. When the target site is unmodified, the DNA is cut. When the target site is hemimethylated, the complex acts as a maintenance MTase modifying the DNA so that both strands become methylated. After locating a non-methylated recognition site, the enzyme complex serves as a molecular motor that translocates DNA in an ATP-dependent manner until a collision occurs that triggers cleavage. The chain is Type I restriction enzyme MjaVII specificity subunit from Methanocaldococcus jannaschii (strain ATCC 43067 / DSM 2661 / JAL-1 / JCM 10045 / NBRC 100440) (Methanococcus jannaschii).